Reading from the N-terminus, the 510-residue chain is ATP synthase subunit alpha (510 aa).

169–176 (GDRQTGKT) is a binding site for ATP.

The protein belongs to the ATPase alpha/beta chains family. F-type ATPases have 2 components, CF(1) - the catalytic core - and CF(0) - the membrane proton channel. CF(1) has five subunits: alpha(3), beta(3), gamma(1), delta(1), epsilon(1). CF(0) has three main subunits: a(1), b(2) and c(9-12). The alpha and beta chains form an alternating ring which encloses part of the gamma chain. CF(1) is attached to CF(0) by a central stalk formed by the gamma and epsilon chains, while a peripheral stalk is formed by the delta and b chains.

It localises to the cell membrane. It catalyses the reaction ATP + H2O + 4 H(+)(in) = ADP + phosphate + 5 H(+)(out). In terms of biological role, produces ATP from ADP in the presence of a proton gradient across the membrane. The alpha chain is a regulatory subunit. This is ATP synthase subunit alpha from Thermomicrobium roseum (strain ATCC 27502 / DSM 5159 / P-2).